A 395-amino-acid polypeptide reads, in one-letter code: MSVEEQIVTPWDVKGSIVDGEEKGIDYERLIVQFGTRKITPEQLERFEKLTGKKPHLLLRRGAFFSHRDFDMILDRYEQKKPFYLYTGRGPSSDSMHLGHMIPFMFCKWLQDVFQVPLVIQLTDDEKFLFKQGVSLEDCQRFARENAKDIIAVGFDPKKTFIFMNSTYVGGAFYQNVVRIAKCITANQSKACFGFTDSDSIGKIHFASIQAAPSFSSSFPHIFNGAKDIPCLIPCAIDQDPYFRLTRDVSGRLKFKKPALLHSRFFPALQGPQSKMSASKDSSAIFMTDTPNKIKNKINRHAFSGGGATIEIHREKGGNPDVDVAYQYLSFFLDDDEKLKQLYNTYKAGTLSTGEMKGECIKLLQQFVSDFQAARSKVDEATLDMFMDGSRKLEW.

The short motif at 91–100 (PSSDSMHLGH) is the 'HIGH' region element. A 'KMSKS' region motif is present at residues 275–279 (KMSAS). 2 positions are modified to phosphothreonine: Thr-288 and Thr-290.

It belongs to the class-I aminoacyl-tRNA synthetase family.

It is found in the cytoplasm. The enzyme catalyses tRNA(Trp) + L-tryptophan + ATP = L-tryptophyl-tRNA(Trp) + AMP + diphosphate + H(+). The polypeptide is Tryptophan--tRNA ligase, cytoplasmic (wrs1) (Schizosaccharomyces pombe (strain 972 / ATCC 24843) (Fission yeast)).